The sequence spans 122 residues: RxLR effector protein Avh52 (122 aa).

Residues 1-21 (MRLTSILVLVIAATFHTTGTA) form the signal peptide. The RxLR-dEER motif lies at 50 to 68 (RLLRRVEKDKVDYEQDEQR). The TAP1-binding stretch occupies residues 69 to 86 (SFGALKDAVKKLNPVTAV). Residues 87 to 98 (KKFFKQRARRKK) form a nuclear localization signal (NLS) region.

It belongs to the RxLR effector family. In terms of assembly, interacts with host acetyl transferase TAP1.

The protein resides in the secreted. It is found in the host nucleus. Effector that suppresses plant defense responses during the early stages of pathogen infection. Suppresses cell death induced by effectors and PAMPs in plant hosts. Interacts with host acetyltransferase TAP1 and causes TAP1 relocation into the nucleus where it acetylates histones H2A and H3 during early infection, thereby promoting susceptibility of host plant to P.sojae. This chain is RxLR effector protein Avh52, found in Phytophthora sojae (Soybean stem and root rot agent).